A 69-amino-acid chain; its full sequence is Guanine nucleotide-binding protein subunit gamma (69 aa).

Ser2 carries the post-translational modification N-acetylserine. Cys66 carries the post-translational modification Cysteine methyl ester. Cys66 carries the S-geranylgeranyl cysteine lipid modification. A propeptide spans 67–69 (removed in mature form); that stretch reads SVL.

It belongs to the G protein gamma family. In terms of assembly, g proteins are composed of 3 units, alpha, beta and gamma. Interacts with gpbA, and this requires phlp1. This protein is thought to be subject to lipidation, and this requires phlp1.

The protein resides in the cell membrane. Guanine nucleotide-binding proteins (G proteins) are involved as a modulator or transducer in various transmembrane signaling systems. This major G-protein of the squid photoreceptor is involved in visual transduction. The beta and gamma chains are required for the GTPase activity, for replacement of GDP by GTP, and for G protein-effector interaction. Required for normal chemotaxis in response to cAMP. The sequence is that of Guanine nucleotide-binding protein subunit gamma (gpgA) from Dictyostelium discoideum (Social amoeba).